A 324-amino-acid chain; its full sequence is MIFSKISQVAHYVPQQLVTNNDLASIMDTSHEWIFSRTGIAERHISRDEMTSDLAIQVADQLLTQSGLKADAIDFIIVATISPDATMPSTAAKVQAAIAATSAFAFDMTAACSGFVFALAMADKLIASGAYQNGMVIGAETLSKLVNWQDRATAVLFGDGAGGVLLEASKDKHVLAETLHTDGARCQSLISGETSLSSPYSIGKKAIATIQMDGRAIFDFAIRDVSKSILTLMAQSDITKDDIDYCLLHQANRRILDKIARKIDVPRGKFLENMMRYGNTSAASIPILLSEAVQKGQIRLDGTQKILLSGFGGGLTWGSLIVKI.

Catalysis depends on residues Cys-112 and His-249. Residues 250 to 254 form an ACP-binding region; sequence QANRR. Asn-279 is an active-site residue.

It belongs to the thiolase-like superfamily. FabH family. Homodimer.

Its subcellular location is the cytoplasm. The enzyme catalyses malonyl-[ACP] + acetyl-CoA + H(+) = 3-oxobutanoyl-[ACP] + CO2 + CoA. It functions in the pathway lipid metabolism; fatty acid biosynthesis. In terms of biological role, catalyzes the condensation reaction of fatty acid synthesis by the addition to an acyl acceptor of two carbons from malonyl-ACP. Catalyzes the first condensation reaction which initiates fatty acid synthesis and may therefore play a role in governing the total rate of fatty acid production. Possesses both acetoacetyl-ACP synthase and acetyl transacylase activities. Its substrate specificity determines the biosynthesis of branched-chain and/or straight-chain of fatty acids. This chain is Beta-ketoacyl-[acyl-carrier-protein] synthase III, found in Streptococcus pyogenes serotype M2 (strain MGAS10270).